The chain runs to 163 residues: 6,7-dimethyl-8-ribityllumazine synthase (163 aa).

5-amino-6-(D-ribitylamino)uracil is bound by residues phenylalanine 27, 58 to 60 (ALE), and 87 to 89 (CVV). 92 to 93 (DT) serves as a coordination point for (2S)-2-hydroxy-3-oxobutyl phosphate. The Proton donor role is filled by histidine 95. Asparagine 120 is a binding site for 5-amino-6-(D-ribitylamino)uracil. Position 134 (arginine 134) interacts with (2S)-2-hydroxy-3-oxobutyl phosphate.

The protein belongs to the DMRL synthase family.

It catalyses the reaction (2S)-2-hydroxy-3-oxobutyl phosphate + 5-amino-6-(D-ribitylamino)uracil = 6,7-dimethyl-8-(1-D-ribityl)lumazine + phosphate + 2 H2O + H(+). It functions in the pathway cofactor biosynthesis; riboflavin biosynthesis; riboflavin from 2-hydroxy-3-oxobutyl phosphate and 5-amino-6-(D-ribitylamino)uracil: step 1/2. Catalyzes the formation of 6,7-dimethyl-8-ribityllumazine by condensation of 5-amino-6-(D-ribitylamino)uracil with 3,4-dihydroxy-2-butanone 4-phosphate. This is the penultimate step in the biosynthesis of riboflavin. In Nitrobacter hamburgensis (strain DSM 10229 / NCIMB 13809 / X14), this protein is 6,7-dimethyl-8-ribityllumazine synthase.